Reading from the N-terminus, the 119-residue chain is Large ribosomal subunit protein uL18 (119 aa).

Residues 1–26 (MGQNDKAARRQKIKLRSKTRGQGTAA) are disordered. Basic residues predominate over residues 9 to 19 (RRQKIKLRSKT).

Belongs to the universal ribosomal protein uL18 family. In terms of assembly, part of the 50S ribosomal subunit; part of the 5S rRNA/L5/L18/L25 subcomplex. Contacts the 5S and 23S rRNAs.

Functionally, this is one of the proteins that bind and probably mediate the attachment of the 5S RNA into the large ribosomal subunit, where it forms part of the central protuberance. The protein is Large ribosomal subunit protein uL18 of Prosthecochloris aestuarii (strain DSM 271 / SK 413).